The following is a 207-amino-acid chain: Small ribosomal subunit protein uS4c (207 aa).

The 62-residue stretch at 92–153 (MRLDNILFRL…PKTYQSILSK (62 aa)) folds into the S4 RNA-binding domain.

Belongs to the universal ribosomal protein uS4 family. Part of the 30S ribosomal subunit. Contacts protein S5. The interaction surface between S4 and S5 is involved in control of translational fidelity.

Its subcellular location is the plastid. It is found in the chloroplast. Functionally, one of the primary rRNA binding proteins, it binds directly to 16S rRNA where it nucleates assembly of the body of the 30S subunit. In terms of biological role, with S5 and S12 plays an important role in translational accuracy. This Equisetum laevigatum (Smooth horsetail) protein is Small ribosomal subunit protein uS4c (rps4).